The chain runs to 117 residues: uncharacterized protein (117 aa).

This is an uncharacterized protein from Mus musculus (Mouse).